A 217-amino-acid polypeptide reads, in one-letter code: MENSRTPTNKTKITLNRTPTLKERRWNTLKVNTSNVRCSTPIFGNFRSPNLSPIENMGTKGKSPVSPMRFATFKKVPTKVHPKQQQQQQHQHCHRTQLKPPPFVLPKPQEEIIEPEREIKSCSSPDTCSDDSNMETSLALESRRRSIKASNHSYVVNHAANVEQILMHMGLENYVTNFEEAHIDLVELASLERADLVKIGLNTDEDCNRIMDVLHTL.

Residues 39–41 (STP) carry the POLO box domain (PBD)-binding motif. 2 positions are modified to phosphoserine: S63 and S66. The disordered stretch occupies residues 83–106 (KQQQQQQHQHCHRTQLKPPPFVLP). Residues 157–217 (NHAANVEQIL…NRIMDVLHTL (61 aa)) enclose the SAM domain.

Interacts with polo. Interacts with cort. Probably ubiquitinated: degraded during the oocyte-to-embryo transition by the anaphase promoting complex/cyclosome (APC/C) containing cort protein.

The protein resides in the nucleus. It is found in the chromosome. Functionally, polo kinase inhibitor required to maintain G2 arrest in the meiotic cell cycle in females. Holds heterochromatically paired homologs together from the end of pachytene until metaphase I. Haploinsufficient locus for homologous achiasmate segregation and may be required for the maintenance of heterochromatic pairings. This chain is Protein matrimony, found in Drosophila melanogaster (Fruit fly).